The sequence spans 248 residues: DNA repair protein RecO (248 aa).

This sequence belongs to the RecO family.

Functionally, involved in DNA repair and RecF pathway recombination. The protein is DNA repair protein RecO of Bacillus mycoides (strain KBAB4) (Bacillus weihenstephanensis).